The primary structure comprises 63 residues: Putative F-box protein At1g47702 (63 aa).

Residues 23-63 (KDRISDLPNRILGKIIVKLPLDEAVRIMALSKRWKSIWDDN) enclose the F-box domain.

The sequence is that of Putative F-box protein At1g47702 from Arabidopsis thaliana (Mouse-ear cress).